The sequence spans 960 residues: Angiomotin-like protein 1 (960 aa).

Residues 196–248 (SQFFRGQQPPPPPPQQQPGAVGHSYYMAGGASQKARTEGRPTVSRANSGQAHK) form a disordered region. Phosphoserine is present on residues S243, S271, and S297. Residues 261–281 (RSLSERIMQLSLERNGAKQHL) are a coiled coil. Disordered stretches follow at residues 277–317 (AKQH…EYPF), 381–407 (LPFP…LHSV), and 413–432 (PPMA…SQQL). Over residues 388 to 401 (QQHSPVSSQNSSVS) the composition is skewed to low complexity. 2 coiled-coil regions span residues 440 to 641 (VERA…WLER) and 667 to 697 (ALME…VEES). Position 722 is a phosphoserine (S722). A coiled-coil region spans residues 731–761 (SLEAHIWQEEEEVVQATRRCQDMEYTIKNLH). The interval 775–826 (QQRSRKDAGKTDSSSLRPARSVPSIAAATGTHSRQTSLTSSQLAEERKEEKT) is disordered. S795, S807, and S830 each carry phosphoserine. Polar residues predominate over residues 804–817 (GTHSRQTSLTSSQL). Residues 842–952 (NDHASTPLLP…NLLHKPEFPD (111 aa)) are disordered. A compositionally biased stretch (low complexity) spans 845–870 (ASTPLLPTPSAATLSPPTPGTSASSA). A compositionally biased stretch (polar residues) spans 898-911 (PTRSRLSGTPSNSP). A Phosphoserine modification is found at S904. Phosphothreonine is present on T906. Phosphoserine is present on S910. A PDZ-binding motif is present at residues 957–960 (EVLI).

Belongs to the angiomotin family. Polyubiquitinated by NEDD4, leading to proteasomal degradation.

It is found in the cell junction. Its subcellular location is the tight junction. In terms of biological role, inhibits the Wnt/beta-catenin signaling pathway, probably by recruiting CTNNB1 to recycling endosomes and hence preventing its translocation to the nucleus. The chain is Angiomotin-like protein 1 (AMOTL1) from Bos taurus (Bovine).